Consider the following 350-residue polypeptide: MSQSAVSFQINSVSKVQEQLIQQKINLKTKPLGALGQLESLALQIARIQGADQPYIANPTMLVFAGDHGIAAEGVSIAPSEVTRQMVQNFAHGGAAINVFCRQVGFKLEVIDCGILTPIEGVKGIIDQRLGAGTGAIHLEPAMALETVDKGFAMARDLIERHHQAGCNLVAFGEMGIGNTSAASAIMAAIMQLDVIDCVGRGTGINQETLARKLMLIELALLLHQSALTGPKEVLACLGGFEIVQMTGAMLAAAERNMLVVVDGFIATAAALVAVTIAPNVRDYLIFAHQSDEQGHLRMLEFLQAKPLLSLGLRLGEGTGAALALPLIQAAVNFYNQMASFSDAGIEAVV.

The active-site Proton acceptor is the glutamate 317.

The protein belongs to the CobT family.

It carries out the reaction 5,6-dimethylbenzimidazole + nicotinate beta-D-ribonucleotide = alpha-ribazole 5'-phosphate + nicotinate + H(+). It functions in the pathway nucleoside biosynthesis; alpha-ribazole biosynthesis; alpha-ribazole from 5,6-dimethylbenzimidazole: step 1/2. Catalyzes the synthesis of alpha-ribazole-5'-phosphate from nicotinate mononucleotide (NAMN) and 5,6-dimethylbenzimidazole (DMB). This Shewanella putrefaciens (strain CN-32 / ATCC BAA-453) protein is Nicotinate-nucleotide--dimethylbenzimidazole phosphoribosyltransferase.